Here is a 1183-residue protein sequence, read N- to C-terminus: DNA-directed RNA polymerase subunit beta (1183 aa).

This sequence belongs to the RNA polymerase beta chain family. As to quaternary structure, the RNAP catalytic core consists of 2 alpha, 1 beta, 1 beta' and 1 omega subunit. When a sigma factor is associated with the core the holoenzyme is formed, which can initiate transcription.

The enzyme catalyses RNA(n) + a ribonucleoside 5'-triphosphate = RNA(n+1) + diphosphate. DNA-dependent RNA polymerase catalyzes the transcription of DNA into RNA using the four ribonucleoside triphosphates as substrates. This is DNA-directed RNA polymerase subunit beta from Staphylococcus aureus (strain JH9).